Consider the following 126-residue polypeptide: Protein translocase subunit SecE (126 aa).

3 helical membrane passes run 20–40, 42–62, and 97–117; these read WLAA…YGEM, VVVR…VAAT, and IVLA…GIMV.

It belongs to the SecE/SEC61-gamma family. Component of the Sec protein translocase complex. Heterotrimer consisting of SecY, SecE and SecG subunits. The heterotrimers can form oligomers, although 1 heterotrimer is thought to be able to translocate proteins. Interacts with the ribosome. Interacts with SecDF, and other proteins may be involved. Interacts with SecA.

It is found in the cell inner membrane. In terms of biological role, essential subunit of the Sec protein translocation channel SecYEG. Clamps together the 2 halves of SecY. May contact the channel plug during translocation. The chain is Protein translocase subunit SecE from Vibrio alginolyticus.